Consider the following 427-residue polypeptide: Cyclic 2,3-diphosphoglycerate synthetase (427 aa).

The protein belongs to the cyclic 2,3-diphosphoglycerate synthetase family.

It is found in the cytoplasm. The catalysed reaction is (2R)-2,3-bisphosphoglycerate + ATP + H(+) = cyclic (2R)-2,3-bisphosphoglycerate + ADP + phosphate. Its function is as follows. Catalyzes the formation of cyclic 2,3-diphosphoglycerate (cDPG) by formation of an intramolecular phosphoanhydride bond at the expense of ATP. The sequence is that of Cyclic 2,3-diphosphoglycerate synthetase from Pyrococcus abyssi (strain GE5 / Orsay).